A 109-amino-acid polypeptide reads, in one-letter code: Cytochrome c-550 (109 aa).

The heme c site is built by C13, C16, H17, and M79.

In terms of processing, binds 1 heme c group covalently per subunit.

The sequence is that of Cytochrome c-550 from Nitrobacter winogradskyi (Nitrobacter agilis).